We begin with the raw amino-acid sequence, 350 residues long: Quinone oxidoreductase-like protein 2 (350 aa).

At lysine 36 the chain carries N6-acetyllysine. Residue lysine 201 is modified to N6-succinyllysine. 2 positions are modified to N6-acetyllysine: lysine 302 and lysine 328.

The protein belongs to the zinc-containing alcohol dehydrogenase family. Quinone oxidoreductase subfamily.

This chain is Quinone oxidoreductase-like protein 2, found in Rattus norvegicus (Rat).